A 178-amino-acid polypeptide reads, in one-letter code: Large ribosomal subunit protein uL6 (178 aa).

It belongs to the universal ribosomal protein uL6 family. Part of the 50S ribosomal subunit.

In terms of biological role, this protein binds to the 23S rRNA, and is important in its secondary structure. It is located near the subunit interface in the base of the L7/L12 stalk, and near the tRNA binding site of the peptidyltransferase center. The sequence is that of Large ribosomal subunit protein uL6 from Limosilactobacillus reuteri (strain DSM 20016) (Lactobacillus reuteri).